The primary structure comprises 21 residues: Magainin-B1 (21 aa).

Expressed by the skin glands.

It localises to the secreted. In terms of biological role, has no antimicrobial activity against tested bacteria. The protein is Magainin-B1 of Xenopus borealis (Kenyan clawed frog).